Here is a 690-residue protein sequence, read N- to C-terminus: Peroxidase (690 aa).

Positions 1 to 20 are cleaved as a signal peptide; that stretch reads MIRARDLLLLALLGFISSAL. A disulfide bond links C100 and C112. H185 acts as the Proton acceptor in catalysis. An N-linked (GlcNAc...) asparagine glycan is attached at N310. A disulfide bridge links C315 with C324. H437 contributes to the heme b binding site. Disulfide bonds link C536/C592 and C636/C662.

Belongs to the peroxidase family. XPO subfamily. Heme b is required as a cofactor.

It localises to the secreted. The catalysed reaction is 2 a phenolic donor + H2O2 = 2 a phenolic radical donor + 2 H2O. Its function is as follows. Involved in the chorion hardening process, through protein cross-linking mediated by the formation of di- and tri-tyrosine bonds. This Drosophila melanogaster (Fruit fly) protein is Peroxidase (Pxd).